A 237-amino-acid chain; its full sequence is MHKKAVVLYSGGLDSTTCLAIARAEGYEPYAMSFSYGQRHSVELEQAKRNARPMGAVDHLVVEFDYRQVGGSALTSDIAVPKEGVGSDIPVTYVPARNTVFLSFALGWAEVLGAFDIFIGVNALDYSGYPDCRPEYIAAFEAMANLATKAGVEGKGRFRIHTPLIHLTKAEIIRKGLSLGVDYGRTHSCYDPTPEGLACGLCDSCRLRLKGFAEAGVADPVAYATIKNPEVRSQESE.

Residue 9-19 (YSGGLDSTTCL) participates in ATP binding. Positions 189, 199, 202, and 205 each coordinate Zn(2+).

It belongs to the QueC family. It depends on Zn(2+) as a cofactor.

The enzyme catalyses 7-carboxy-7-deazaguanine + NH4(+) + ATP = 7-cyano-7-deazaguanine + ADP + phosphate + H2O + H(+). The protein operates within purine metabolism; 7-cyano-7-deazaguanine biosynthesis. Catalyzes the ATP-dependent conversion of 7-carboxy-7-deazaguanine (CDG) to 7-cyano-7-deazaguanine (preQ(0)). This chain is 7-cyano-7-deazaguanine synthase, found in Geobacter metallireducens (strain ATCC 53774 / DSM 7210 / GS-15).